The primary structure comprises 87 residues: Large ribosomal subunit protein bL27 (87 aa).

The tract at residues 1–21 (MAHKKAGGSSRNGRDSESKRL) is disordered.

It belongs to the bacterial ribosomal protein bL27 family.

The chain is Large ribosomal subunit protein bL27 from Burkholderia ambifaria (strain MC40-6).